The following is a 238-amino-acid chain: Large ribosomal subunit protein bL25 (238 aa).

Basic and acidic residues predominate over residues 1–10 (MATTVKELKA). The interval 1–24 (MATTVKELKATARPKSGKGAARAE) is disordered.

It belongs to the bacterial ribosomal protein bL25 family. CTC subfamily. As to quaternary structure, part of the 50S ribosomal subunit; part of the 5S rRNA/L5/L18/L25 subcomplex. Contacts the 5S rRNA. Binds to the 5S rRNA independently of L5 and L18.

In terms of biological role, this is one of the proteins that binds to the 5S RNA in the ribosome where it forms part of the central protuberance. This is Large ribosomal subunit protein bL25 from Bradyrhizobium diazoefficiens (strain JCM 10833 / BCRC 13528 / IAM 13628 / NBRC 14792 / USDA 110).